A 485-amino-acid polypeptide reads, in one-letter code: Ulvan lyase (485 aa).

The N-terminal stretch at Met1–Gly33 is a signal peptide. A lipid anchor (N-palmitoyl cysteine) is attached at Cys34. Cys34 carries the S-diacylglycerol cysteine lipid modification. Substrate contacts are provided by Asn64 and Asn126. The interval Phe108–Gly128 is disordered. Residues Leu115 to Gly128 show a composition bias toward basic and acidic residues. The active-site Proton donor is His127. Lys129 and His147 together coordinate substrate. Catalysis depends on Tyr192, which acts as the Proton acceptor. Substrate-binding residues include Arg208, His212, and Tyr250. Residue His212 participates in Zn(2+) binding. Zn(2+) contacts are provided by His268, Cys270, and His282. His282 contacts substrate.

The protein belongs to the polysaccharide lyase 25 family.

The protein resides in the cell membrane. Functionally, ulvan lyase involved in ulvan degradation. Ulvan is the main polysaccharide component of the Ulvales (green seaweed) cell wall. It is composed of disaccharide building blocks comprising 3-sulfated rhamnose (Rha3S) linked to D-glucuronic acid (GlcA), L-iduronic acid (IduA), or D-xylose (Xyl). Ulvan lyase catalyzes the endolytic cleavage of the glycosidic bond between Rha3S and the uronic acids GlcA or IduA, producing oligosaccharides that have unsaturated 4-deoxy-L-threo-hex-4-enopyranosiduronic acid (deltaUA) at the non-reducing end. This results eventually in the degradation of the ulvan polysaccharide into deltaUA-Rha3S disaccharides and deltaUA-Rha3S-Xyl-Rha3S tetrasaccharides. The polypeptide is Ulvan lyase (Alteromonas sp. (strain LOR)).